The sequence spans 66 residues: Cold shock-like protein CspLA (66 aa).

Positions 4–63 constitute a CSD domain; the sequence is GTVKWFNAEKGFGFIERENGDDVFVHFSAIQGDGFKSLDEGQAVTFDVEEGQRGPQAANV.

In terms of assembly, homodimer.

Its subcellular location is the cytoplasm. The polypeptide is Cold shock-like protein CspLA (cspLA) (Listeria innocua serovar 6a (strain ATCC BAA-680 / CLIP 11262)).